The chain runs to 289 residues: Ribosomal protein L11 methyltransferase (289 aa).

The S-adenosyl-L-methionine site is built by Thr135, Gly156, Asp179, and Asn225.

The protein belongs to the methyltransferase superfamily. PrmA family.

Its subcellular location is the cytoplasm. It carries out the reaction L-lysyl-[protein] + 3 S-adenosyl-L-methionine = N(6),N(6),N(6)-trimethyl-L-lysyl-[protein] + 3 S-adenosyl-L-homocysteine + 3 H(+). Functionally, methylates ribosomal protein L11. The sequence is that of Ribosomal protein L11 methyltransferase from Chlorobaculum parvum (strain DSM 263 / NCIMB 8327) (Chlorobium vibrioforme subsp. thiosulfatophilum).